Consider the following 144-residue polypeptide: MIALIQRVSEASVRVDGEITGEINQGLLILLGVEREDDEAKAKRLVERVLTYRIFEDDEGKMNLNVQQVNGSVLVVSQFTLPADTKKGTRPGFSKGANPIDAERLYDHFSDLCDEKLTTQRGRFAADMKVSLVNDGPVTFWLQV.

The Gly-cisPro motif, important for rejection of L-amino acids motif lies at 136-137 (GP).

Belongs to the DTD family. As to quaternary structure, homodimer.

It is found in the cytoplasm. It carries out the reaction glycyl-tRNA(Ala) + H2O = tRNA(Ala) + glycine + H(+). The enzyme catalyses a D-aminoacyl-tRNA + H2O = a tRNA + a D-alpha-amino acid + H(+). An aminoacyl-tRNA editing enzyme that deacylates mischarged D-aminoacyl-tRNAs. Also deacylates mischarged glycyl-tRNA(Ala), protecting cells against glycine mischarging by AlaRS. Acts via tRNA-based rather than protein-based catalysis; rejects L-amino acids rather than detecting D-amino acids in the active site. By recycling D-aminoacyl-tRNA to D-amino acids and free tRNA molecules, this enzyme counteracts the toxicity associated with the formation of D-aminoacyl-tRNA entities in vivo and helps enforce protein L-homochirality. The sequence is that of D-aminoacyl-tRNA deacylase from Aliivibrio salmonicida (strain LFI1238) (Vibrio salmonicida (strain LFI1238)).